Reading from the N-terminus, the 435-residue chain is Cell adhesion molecule 2 (435 aa).

A signal peptide spans 1–24 (MIWKRSAVLRFYSVCGLLLQGSQG). At 25–367 (QFPLTQNVTV…SLAGQNGPDH (343 aa)) the chain is on the extracellular side. An Ig-like V-type domain is found at 27–119 (PLTQNVTVVE…PVKTSKAYLT (93 aa)). N-linked (GlcNAc...) asparagine glycosylation is found at N31 and N51. 3 disulfide bridges follow: C44–C104, C146–C203, and C248–C296. Ig-like C2-type domains are found at residues 127–219 (PQIS…VAMQ) and 227–312 (PSVK…YVLI). The N-linked (GlcNAc...) asparagine glycan is linked to N291. Over residues 337-351 (SVTITTSPSTSASSS) the composition is skewed to low complexity. The interval 337 to 360 (SVTITTSPSTSASSSSRRDPNSLA) is disordered. Residues 368–388 (ALIGGIVAVVVFVTLCSIFLL) traverse the membrane as a helical segment. Over 389–435 (GRYLARHKGTYLTNEAKGAEDAPDADTAIINAEGSQVNAEEKKEYFI) the chain is Cytoplasmic. S423 carries the post-translational modification Phosphoserine.

The protein belongs to the nectin family. Glycosylation at Asn-51 reduces adhesive binding.

It is found in the cell membrane. It localises to the synapse. The protein localises to the cell projection. The protein resides in the axon. Its function is as follows. Adhesion molecule that engages in homo- and heterophilic interactions with the other nectin-like family members, leading to cell aggregation. Important for synapse organization, providing regulated trans-synaptic adhesion. Preferentially binds to oligodendrocytes. The protein is Cell adhesion molecule 2 (Cadm2) of Mus musculus (Mouse).